Reading from the N-terminus, the 602-residue chain is Elongation factor 4 (602 aa).

Residues 7 to 189 (KYIRNFSIVA…AIVNKVPAPD (183 aa)) form the tr-type G domain. GTP is bound by residues 19-24 (DHGKST) and 136-139 (NKID).

This sequence belongs to the TRAFAC class translation factor GTPase superfamily. Classic translation factor GTPase family. LepA subfamily.

It localises to the cell membrane. The enzyme catalyses GTP + H2O = GDP + phosphate + H(+). In terms of biological role, required for accurate and efficient protein synthesis under certain stress conditions. May act as a fidelity factor of the translation reaction, by catalyzing a one-codon backward translocation of tRNAs on improperly translocated ribosomes. Back-translocation proceeds from a post-translocation (POST) complex to a pre-translocation (PRE) complex, thus giving elongation factor G a second chance to translocate the tRNAs correctly. Binds to ribosomes in a GTP-dependent manner. This Clostridium botulinum (strain ATCC 19397 / Type A) protein is Elongation factor 4.